We begin with the raw amino-acid sequence, 206 residues long: MAKQGMLIVLSGPSGVGKGTVRKEIFDSDDNDFQYSVSMTTRQMRPGEVDGKDYYFVSKEEFEDEIKSGGMLEYAKYVDNYYGTPLKYIKQSLAAGKDVFLEIEVNGAMQVREKMPDGVFIFLTPPDLMELKHRIIGRGTDDMSVINKRMAKAVDEIKMMRNYDYAVINDEVPLAAERIKAIIRSERFSVKRVMPEYEEMLGDAES.

The 180-residue stretch at Gly5–Arg184 folds into the Guanylate kinase-like domain. Gly12–Gly19 contributes to the ATP binding site.

This sequence belongs to the guanylate kinase family.

It is found in the cytoplasm. It carries out the reaction GMP + ATP = GDP + ADP. Functionally, essential for recycling GMP and indirectly, cGMP. This chain is Guanylate kinase, found in Lactiplantibacillus plantarum (strain ATCC BAA-793 / NCIMB 8826 / WCFS1) (Lactobacillus plantarum).